We begin with the raw amino-acid sequence, 62 residues long: Alpha-conotoxin-like Ca1.1 (62 aa).

A signal peptide spans Met-1–Ser-21. The propeptide occupies Phe-22 to Arg-46. At Gln-47 the chain carries Pyrrolidone carboxylic acid. Intrachain disulfides connect Cys-49–Cys-55 and Cys-50–Cys-61.

This sequence belongs to the conotoxin A superfamily. Expressed by the venom duct.

It localises to the secreted. Alpha-conotoxins act on postsynaptic membranes, they bind to the nicotinic acetylcholine receptors (nAChR) and thus inhibit them. This chain is Alpha-conotoxin-like Ca1.1, found in Conus caracteristicus (Characteristic cone).